The sequence spans 317 residues: Ataxin-3 homolog (317 aa).

The Josephin domain occupies 7 to 178 (INSIFFEHQE…RSDADDLISL (172 aa)). Residue Cys20 is the Nucleophile of the active site. The active-site Proton acceptor is the His117. Residue Asn132 is part of the active site. UIM domains are found at residues 219–239 (SQEEKDLAIAFAMSMETKDGS) and 247–264 (EIDEENLRKAIELSQAPG). The disordered stretch occupies residues 254–317 (RKAIELSQAP…KKKEERNDEK (64 aa)). Residues 276–293 (RSRSSTPPGASEPFSNAE) are compositionally biased toward polar residues. Over residues 294 to 317 (QQRRDRQKFLERFEKKKEERNDEK) the composition is skewed to basic and acidic residues. The tract at residues 296-299 (RRDR) is interaction with cdc-48.1 and cdc-48.2.

Forms a complex composed of deubiquitinating enzyme atx-3, adapter ubxn-5 and cdc-48.1. Forms a complex composed of deubiquitinating enzyme atx-3, E4 ubiquitin-protein ligase ufd-2 and cdc-48.1. Interacts (via RRDR motif) with cdc-48.1 (via N-terminus) and cdc-48.2 (via N-terminus); the interaction with cdc-48.1 is not required for atx-3 enzymatic activity. Interacts (via C-terminus) with ubxn-5. May interact with ned-8. As to expression, expressed in germline (at protein level). Expressed in spermatheca, pharynx, dorsal and ventral cords, some head neurons, hypodermis, body wall muscles and coelomocytes.

It is found in the cytoplasm. Its subcellular location is the nucleus. The protein localises to the nucleolus. It carries out the reaction Thiol-dependent hydrolysis of ester, thioester, amide, peptide and isopeptide bonds formed by the C-terminal Gly of ubiquitin (a 76-residue protein attached to proteins as an intracellular targeting signal).. In terms of biological role, acts as a chain editing deubiquitinating enzyme that binds and cleaves 'Lys-48'-linked polyubiquitin chains, with a preference for chains containing four or more ubiquitin molecules thereby modulating protein degradation by the ubiquitin-proteasome pathway. Probably by regulating the IGF-1-insulin-like pathway, regulates lifespan. Regulates germline DNA double-strand-break repair and apoptosis in response to DNA damage by recruiting E4 ubiquitin-protein ligase ufd-2 to DNA repair foci. Interacts with key regulators of transcription and represses transcription. Acts as a histone-binding protein that regulates transcription. In Caenorhabditis elegans, this protein is Ataxin-3 homolog (atx-3).